Reading from the N-terminus, the 399-residue chain is ATP-dependent RNA helicase fal1 (399 aa).

The short motif at 25 to 53 is the Q motif element; that stretch reads PTFEDMHLKESLLRGIYAYGYESPSAVQS. The Helicase ATP-binding domain occupies 56-226; it reads IVQICKGRDT…TKFMTDPVRV (171 aa). 69 to 76 is an ATP binding site; the sequence is AQSGTGKT. Positions 174–177 match the DEAD box motif; sequence DEAD. The Helicase C-terminal domain maps to 237–398; that stretch reads GIKQYFIAVE…EMPMNVADLL (162 aa).

Belongs to the DEAD box helicase family. DDX48/FAL1 subfamily.

Its subcellular location is the nucleus. It is found in the nucleolus. It carries out the reaction ATP + H2O = ADP + phosphate + H(+). ATP-dependent RNA helicase involved in 40S ribosomal subunit biogenesis. Required for the processing and cleavage of 35S pre-rRNA at sites A0, A1, and A2, leading to mature 18S rRNA. This chain is ATP-dependent RNA helicase fal1 (fal1), found in Aspergillus niger (strain ATCC MYA-4892 / CBS 513.88 / FGSC A1513).